The chain runs to 386 residues: Innexin inx4 (386 aa).

At 1-21 (MLEFVRPLQSILQIKQVNSTD) the chain is on the cytoplasmic side. A helical membrane pass occupies residues 22–42 (LVWRLHCRVTVFLLLLASLLL). Topologically, residues 43 to 111 (SARQYFGNPI…ESERSYQKYY (69 aa)) are extracellular. A helical transmembrane segment spans residues 112–132 (QWVVFILALQACMFSVPNFLW). Over 133 to 187 (KAWEAGRLQSLCDGLTTPIVPDHWEKTRKKQLITYLSADFPRLHRTYLLRYCFCT) the chain is Cytoplasmic. The helical transmembrane segment at 188 to 208 (LLNFCNVLLNIFLVNVIFSGF) threads the bilayer. Topologically, residues 209–272 (WSNYHPAVKA…LNVVNEKIFA (64 aa)) are extracellular. A helical transmembrane segment spans residues 273-293 (FIWLWFLGLLVISMLNLLFWI). The Cytoplasmic segment spans residues 294 to 386 (VVLCSKGFRL…DPEGYDEEGV (93 aa)). Positions 358-386 (HNGHKTFRMPKGGEPDFYTDPEGYDEEGV) are disordered. Over residues 374–386 (FYTDPEGYDEEGV) the composition is skewed to acidic residues.

It belongs to the pannexin family.

Its subcellular location is the cell membrane. It localises to the cell junction. The protein localises to the gap junction. Structural component of gap junctions. Required for normal development of ovary. Required for normal egg production after blood meal. Required for normal development of testis. In terms of biological role, (Microbial infection) Modulates the development of Plasmodium falciparum oocysts. The polypeptide is Innexin inx4 (Anopheles gambiae (African malaria mosquito)).